A 417-amino-acid polypeptide reads, in one-letter code: Serpin H1 (417 aa).

The first 18 residues, 1–18 (MRSLLLLSAFCLLEAALA), serve as a signal peptide directing secretion. Lysine 94 is modified (N6-succinyllysine). N-linked (GlcNAc...) asparagine glycans are attached at residues asparagine 120 and asparagine 125. Phosphoserine is present on serine 141. Lysine 206 is subject to N6-acetyllysine. Lysine 295 is subject to N6-succinyllysine. At lysine 318 the chain carries N6-acetyllysine. A Prevents secretion from ER motif is present at residues 414–417 (RDEL).

It belongs to the serpin family.

It localises to the endoplasmic reticulum lumen. Functionally, binds specifically to collagen. Could be involved as a chaperone in the biosynthetic pathway of collagen. This is Serpin H1 (SERPINH1) from Pongo abelii (Sumatran orangutan).